Here is a 486-residue protein sequence, read N- to C-terminus: MTATVNEAPASTSKGATGRIARVIGPVVDVEFSADTMPDQNNALTTQVTMGGTTQTVTLEVASHLGDNMVRAISLKPTDGMVRGAAVVDTGAPISVPVGNATLGHVFNAIGECLNLEEGEQLEVHERWPIHRKAPNFDQLESRTTMFETGIKVIDLLTPYVQGGKIGLFGGAGVGKTVLIQEMIQRVAQNHGGVSVFAGVGERTREGNDLIGEMAEAGVFDKTALVFGQMDEPPGTRLRVALSALTMAEYFRDVQNQDVLLFIDNIFRFTQAGSEVSTLLGRMPSAVGYQPTLADEMGVLQERITSTRGHSITSLQAIYVPADDYTDPAPATTFAHLDATTELSREIASRGLYPAVDPLTSTSRILDPLYIAQDHYDTAVRVKQILQRNKELQDIIAILGVDELSEEDKLTVSRARRIQQFLSQNTYMAEKFTGVEGSTVPLKETIEGFSKIADGELDHVAEQAFFNVGGLEDVERNWARIQKETA.

170–177 (GGAGVGKT) provides a ligand contact to ATP.

It belongs to the ATPase alpha/beta chains family. As to quaternary structure, F-type ATPases have 2 components, CF(1) - the catalytic core - and CF(0) - the membrane proton channel. CF(1) has five subunits: alpha(3), beta(3), gamma(1), delta(1), epsilon(1). CF(0) has three main subunits: a(1), b(2) and c(9-12). The alpha and beta chains form an alternating ring which encloses part of the gamma chain. CF(1) is attached to CF(0) by a central stalk formed by the gamma and epsilon chains, while a peripheral stalk is formed by the delta and b chains.

The protein localises to the cell membrane. It carries out the reaction ATP + H2O + 4 H(+)(in) = ADP + phosphate + 5 H(+)(out). In terms of biological role, produces ATP from ADP in the presence of a proton gradient across the membrane. The catalytic sites are hosted primarily by the beta subunits. The sequence is that of ATP synthase subunit beta from Kineococcus radiotolerans (strain ATCC BAA-149 / DSM 14245 / SRS30216).